The sequence spans 569 residues: WD repeat-containing protein 20 (569 aa).

The residue at position 2 (Ala2) is an N-acetylalanine. WD repeat units follow at residues 94 to 138 (RIYK…KETS), 139 to 210 (KLFN…KSTR), 211 to 252 (NPLL…FDSV), 253 to 331 (ELHG…SGSD), 332 to 426 (EDFQ…NSVP), 427 to 523 (PPLP…VPLL), and 524 to 559 (EPLICKKIAHERLTVLIFLEDCIVTACQEGFICTWG). Phosphoserine is present on residues Ser357 and Ser360. Polar residues-rich tracts occupy residues 405–423 (NATSPPAGSNGNSVTTPGN) and 431–445 (RSNSLPHSAVSNAGS). Positions 405 to 445 (NATSPPAGSNGNSVTTPGNSVPPPLPRSNSLPHSAVSNAGS) are disordered. 3 positions are modified to phosphoserine: Ser432, Ser434, and Ser465. The segment at 450 to 468 (MDGAIASGVSKFATLSLHD) is mediates XPO1-dependent nuclear export of WDR20-USP12 complexes.

In terms of assembly, interacts with USP12; promotes translocation of USP12/WDR20 to the plasma membrane. Component of the USP12/WDR20/WDR48 deubiquitinating complex. Interacts with USP46; contributes to the cytoplasmic localization of the USP46/WDR20 complex. Component of the USP12/DMWD/WDR48 deubiquitinating complex.

It localises to the cytoplasm. The protein localises to the nucleus. In terms of biological role, regulator of deubiquitinating complexes. Activates deubiquitinating activity of complexes containing USP12. Anchors at the base of the ubiquitin-contacting loop of USP12 and remotely modulates the catalytic center of the enzyme. Regulates shuttling of the USP12 deubiquitinase complex between the plasma membrane, cytoplasm and nucleus. This is WD repeat-containing protein 20 (WDR20) from Homo sapiens (Human).